The chain runs to 264 residues: Movement protein (264 aa).

The interval 211 to 264 is disordered; sequence RTKSSKRGPKNNNNLGKGRSGGRPKPKSVDEVEEEFDNLIEDEAETSVADSDSY. Over residues 241-255 the composition is skewed to acidic residues; that stretch reads EVEEEFDNLIEDEAE.

This sequence belongs to the tobamovirus movement protein family. As to quaternary structure, binds to host RBCS at the plasmodesmata; this interaction seems required for viral systemic movement. In resistant plants, interacts with host MBP2C at host microtubules; this interaction prevents virus cell to cell movement. In resistant plants, interacts with host resistance (R) protein (e.g. tomato ToMV resistance protein TM-2(2), AC Q71BG9) at the host plasma membrane; this interaction triggers host defense responses leading to programmed cell death.

The protein localises to the host cytoplasm. It localises to the host cytoskeleton. The protein resides in the host cell junction. It is found in the host plasmodesma. In terms of biological role, transports viral genome to neighboring plant cells directly through plasmosdesmata, without any budding. The movement protein allows efficient cell to cell propagation, by bypassing the host cell wall barrier. Forms a ribonucleoprotein complex with viral RNA. Binds microtubules and modulates microtubule stability. Can bind double-stranded DNA. Triggers host hypersensitive defense reaction in incompatible plants harboring resistance (R) proteins. The sequence is that of Movement protein (MP) from Antirrhinum majus (Garden snapdragon).